Here is a 176-residue protein sequence, read N- to C-terminus: Large ribosomal subunit protein uL6 (176 aa).

The protein belongs to the universal ribosomal protein uL6 family. In terms of assembly, part of the 50S ribosomal subunit.

Its function is as follows. This protein binds to the 23S rRNA, and is important in its secondary structure. It is located near the subunit interface in the base of the L7/L12 stalk, and near the tRNA binding site of the peptidyltransferase center. This chain is Large ribosomal subunit protein uL6, found in Thiobacillus denitrificans (strain ATCC 25259 / T1).